We begin with the raw amino-acid sequence, 357 residues long: UDP-N-acetylglucosamine--N-acetylmuramyl-(pentapeptide) pyrophosphoryl-undecaprenol N-acetylglucosamine transferase (357 aa).

UDP-N-acetyl-alpha-D-glucosamine-binding positions include T12 to G14, N124, R162, S190, I243, A262 to E267, and Q288.

This sequence belongs to the glycosyltransferase 28 family. MurG subfamily.

It is found in the cell inner membrane. It carries out the reaction di-trans,octa-cis-undecaprenyl diphospho-N-acetyl-alpha-D-muramoyl-L-alanyl-D-glutamyl-meso-2,6-diaminopimeloyl-D-alanyl-D-alanine + UDP-N-acetyl-alpha-D-glucosamine = di-trans,octa-cis-undecaprenyl diphospho-[N-acetyl-alpha-D-glucosaminyl-(1-&gt;4)]-N-acetyl-alpha-D-muramoyl-L-alanyl-D-glutamyl-meso-2,6-diaminopimeloyl-D-alanyl-D-alanine + UDP + H(+). The protein operates within cell wall biogenesis; peptidoglycan biosynthesis. Its function is as follows. Cell wall formation. Catalyzes the transfer of a GlcNAc subunit on undecaprenyl-pyrophosphoryl-MurNAc-pentapeptide (lipid intermediate I) to form undecaprenyl-pyrophosphoryl-MurNAc-(pentapeptide)GlcNAc (lipid intermediate II). The protein is UDP-N-acetylglucosamine--N-acetylmuramyl-(pentapeptide) pyrophosphoryl-undecaprenol N-acetylglucosamine transferase of Alcanivorax borkumensis (strain ATCC 700651 / DSM 11573 / NCIMB 13689 / SK2).